The primary structure comprises 283 residues: Pantothenate synthetase (283 aa).

34–41 (MGALHEGH) lines the ATP pocket. Histidine 41 functions as the Proton donor in the catalytic mechanism. Glutamine 65 serves as a coordination point for (R)-pantoate. Glutamine 65 serves as a coordination point for beta-alanine. 152–155 (GQKD) provides a ligand contact to ATP. Glutamine 158 contacts (R)-pantoate. Residues valine 181 and 189 to 192 (MSSR) each bind ATP.

Belongs to the pantothenate synthetase family. As to quaternary structure, homodimer.

The protein resides in the cytoplasm. The enzyme catalyses (R)-pantoate + beta-alanine + ATP = (R)-pantothenate + AMP + diphosphate + H(+). It functions in the pathway cofactor biosynthesis; (R)-pantothenate biosynthesis; (R)-pantothenate from (R)-pantoate and beta-alanine: step 1/1. Its function is as follows. Catalyzes the condensation of pantoate with beta-alanine in an ATP-dependent reaction via a pantoyl-adenylate intermediate. The polypeptide is Pantothenate synthetase (Nitrobacter winogradskyi (strain ATCC 25391 / DSM 10237 / CIP 104748 / NCIMB 11846 / Nb-255)).